Reading from the N-terminus, the 202-residue chain is Glycerol-3-phosphate acyltransferase (202 aa).

Transmembrane regions (helical) follow at residues 11 to 31 (LLLF…GMVI), 60 to 80 (AAAA…VLLA), 88 to 108 (AAQL…WLGF), 117 to 137 (FLGL…LTWL), and 162 to 182 (LLLG…VILW).

Belongs to the PlsY family. Probably interacts with PlsX.

The protein localises to the cell inner membrane. It catalyses the reaction an acyl phosphate + sn-glycerol 3-phosphate = a 1-acyl-sn-glycero-3-phosphate + phosphate. It participates in lipid metabolism; phospholipid metabolism. Its function is as follows. Catalyzes the transfer of an acyl group from acyl-phosphate (acyl-PO(4)) to glycerol-3-phosphate (G3P) to form lysophosphatidic acid (LPA). This enzyme utilizes acyl-phosphate as fatty acyl donor, but not acyl-CoA or acyl-ACP. This Ruegeria sp. (strain TM1040) (Silicibacter sp.) protein is Glycerol-3-phosphate acyltransferase.